A 363-amino-acid chain; its full sequence is MAVLDLNLTTVIDSGFMESDRSVRVLTGCFLSVLILSTLLGNTLVCAAVTKFRHLRSKVTNFFVISLAVSDLLVAVLVMPWKAVTEVAGFWPFGAFCDIWVAFDIMCSTASILNLCVISVDRYWAISSPFRYERKMTPRVAFVMISGAWTLSVLISFIPVQLKWHKAQPIGFLEVNASRRDLPTDNCDSSLNRTYAISSSLISFYIPVAIMIVTYTQIYRIAQKQIRRISALERAAESAQIRHDSMGSGSNMDLESSFKLSFKRETKVLKTLSVIMGVFVCCWLPFFILNCMVPFCKRTSNGLPCISPTTFDVFVWFGWANSSLNPIIYAFNADFRRAFAILLGCQRLCPGSISMETPSLNKN.

The Extracellular segment spans residues 1–24 (MAVLDLNLTTVIDSGFMESDRSVR). N-linked (GlcNAc...) asparagine glycosylation is present at Asn-7. A helical membrane pass occupies residues 25–45 (VLTGCFLSVLILSTLLGNTLV). Topologically, residues 46-61 (CAAVTKFRHLRSKVTN) are cytoplasmic. A helical membrane pass occupies residues 62 to 81 (FFVISLAVSDLLVAVLVMPW). The Extracellular segment spans residues 82–98 (KAVTEVAGFWPFGAFCD). A disulfide bond links Cys-97 and Cys-187. A helical membrane pass occupies residues 99-120 (IWVAFDIMCSTASILNLCVISV). At 121 to 139 (DRYWAISSPFRYERKMTPR) the chain is on the cytoplasmic side. A helical transmembrane segment spans residues 140-164 (VAFVMISGAWTLSVLISFIPVQLKW). At 165–194 (HKAQPIGFLEVNASRRDLPTDNCDSSLNRT) the chain is on the extracellular side. A helical transmembrane segment spans residues 195–219 (YAISSSLISFYIPVAIMIVTYTQIY). Over 220-271 (RIAQKQIRRISALERAAESAQIRHDSMGSGSNMDLESSFKLSFKRETKVLKT) the chain is Cytoplasmic. The helical transmembrane segment at 272–297 (LSVIMGVFVCCWLPFFILNCMVPFCK) threads the bilayer. Residues 298–310 (RTSNGLPCISPTT) lie on the Extracellular side of the membrane. A helical membrane pass occupies residues 311 to 330 (FDVFVWFGWANSSLNPIIYA). Over 331–363 (FNADFRRAFAILLGCQRLCPGSISMETPSLNKN) the chain is Cytoplasmic. Cys-345 is lipidated: S-palmitoyl cysteine.

It belongs to the G-protein coupled receptor 1 family. In terms of tissue distribution, retina.

The protein resides in the cell membrane. Its subcellular location is the cell projection. It is found in the cilium membrane. Functionally, dopamine receptor whose activity is mediated by G proteins which activate adenylyl cyclase. Could be involved in growth hormone release. This chain is D(1) dopamine receptor, found in Carassius auratus (Goldfish).